Here is a 363-residue protein sequence, read N- to C-terminus: Isopentenyl-diphosphate delta-isomerase (363 aa).

Residue 15 to 16 (RK) participates in substrate binding. FMN contacts are provided by residues S73, 74–76 (SMT), S104, and N133. Position 104-106 (104-106 (SMR)) interacts with substrate. Q168 contributes to the substrate binding site. E169 lines the Mg(2+) pocket. FMN is bound by residues K200, T230, and 313-314 (AG).

The protein belongs to the IPP isomerase type 2 family. Homooctamer. Dimer of tetramers. The cofactor is FMN. NADPH is required as a cofactor. Mg(2+) serves as cofactor.

The protein localises to the cytoplasm. The enzyme catalyses isopentenyl diphosphate = dimethylallyl diphosphate. In terms of biological role, involved in the biosynthesis of isoprenoids. Catalyzes the 1,3-allylic rearrangement of the homoallylic substrate isopentenyl (IPP) to its allylic isomer, dimethylallyl diphosphate (DMAPP). The sequence is that of Isopentenyl-diphosphate delta-isomerase from Chlorobium phaeobacteroides (strain DSM 266 / SMG 266 / 2430).